We begin with the raw amino-acid sequence, 391 residues long: Nutrient and stress factor 1 (391 aa).

Over residues 1–27 (MENTTNRNTAGVLTSSNGNFATNSVAA) the composition is skewed to polar residues. The disordered stretch occupies residues 1–37 (MENTTNRNTAGVLTSSNGNFATNSVAASTPKRSKSAR). 2 C2H2-type zinc fingers span residues 41 to 66 (FKCT…IRKH) and 72 to 95 (FQCP…ESVH). The segment at 91–149 (RESVHAHKNHHSTSSHQRKPSSSSLSSSSSASSSSSASSSTSYSDPYRKTNINSGNMPM) is disordered. Basic residues predominate over residues 96 to 109 (AHKNHHSTSSHQRK). Positions 110 to 134 (PSSSSLSSSSSASSSSSASSSTSYS) are enriched in low complexity. Phosphoserine is present on residues Ser-162 and Ser-163. Residues 326-374 (AFSQPPNGNKNNNMSSSKNGGKGGENFKNTDDRNDNNNKKRSETLSESD) are disordered. Low complexity predominate over residues 332–344 (NGNKNNNMSSSKN). The segment covering 353–369 (KNTDDRNDNNNKKRSET) has biased composition (basic and acidic residues).

It localises to the nucleus. In terms of biological role, transcription factor that participates in the transcriptional activation of glucose-repressed genes during exponential growth in non-fermentable carbon conditions. Also involved in salt-stress response. The chain is Nutrient and stress factor 1 (USV1) from Saccharomyces cerevisiae (strain ATCC 204508 / S288c) (Baker's yeast).